The following is a 240-amino-acid chain: MFLVGLTGGIASGKSSVIQVFQQLGCAVIDVDVIARHIVQPGCPAHRRIVEAFGTEVLLENGDINRKVLGDLIFNQPDRRQLLNSITHPEIRKEMMKETFKYFLRGYRYVILDIPLLFETKKLLKYMKHTVVVYCDRDTQLARLMKRNNLNREDAEARINSQLPLKDKARMANHVLDNSGEWSLTRRQVILLHAKLERSMEYLPLRLGFLTGLAGIASLLYLLTRYLLPSPQLGNPGSKP.

A DPCK domain is found at 3–207 (LVGLTGGIAS…RSMEYLPLRL (205 aa)). 8 to 15 (GGIASGKS) is a binding site for ATP.

The protein belongs to the CoaE family.

The sequence is that of Dephospho-CoA kinase domain-containing protein (Dcakd) from Rattus norvegicus (Rat).